The following is a 493-amino-acid chain: MNSTSLYAAIDLGSNSFHMLVVREAAGSIQTLTRIKRKVRLAAGLNNDNHLSAEAMERGWQCLRLFAERLQDIPQPQIRVVATATLRLAVNAGEFIAKAQTILGCPVQVISGEEEARLIYQGVAHTTGGADQRLVVDIGGASTELVTGTGAQTTSLFSLSMGCVTWLERYFSDRNLAQENFDDAEKAARDVLRPVADELRFHGWKVCVGASGTVQALQEIMMAQGMDERITLAKLQQLKQRAIQCGRLEELEIEGLTLERALVFPSGLAILIAIFTELNIQSMTLAGGALREGLVYGMLHLAVDQDIRSRTLRNIQRRFIVDTDQANRVAKLADNFLKQVENAWHIEPISRELLLSACQLHEIGLSVDFKQAPYHAAYLVRHLDLPGYTPAQKKLLATLLLNQTNPVDLSSLHQQNAVPPRVAEQLCRLLRLAILFAGRRRDDLVPEITLQALNENLTLTLPSDWLAHHPLGKELIDQESQWQSYVHWPLDVR.

This sequence belongs to the GppA/Ppx family. GppA subfamily.

It catalyses the reaction guanosine 3'-diphosphate 5'-triphosphate + H2O = guanosine 3',5'-bis(diphosphate) + phosphate + H(+). The protein operates within purine metabolism; ppGpp biosynthesis; ppGpp from GTP: step 2/2. Its function is as follows. Catalyzes the conversion of pppGpp to ppGpp. Guanosine pentaphosphate (pppGpp) is a cytoplasmic signaling molecule which together with ppGpp controls the 'stringent response', an adaptive process that allows bacteria to respond to amino acid starvation, resulting in the coordinated regulation of numerous cellular activities. The polypeptide is Guanosine-5'-triphosphate,3'-diphosphate pyrophosphatase (Salmonella paratyphi B (strain ATCC BAA-1250 / SPB7)).